We begin with the raw amino-acid sequence, 98 residues long: YcgL domain-containing protein CJA_2437 (98 aa).

Residues 3 to 87 enclose the YcgL domain; sequence IIAEIYRSPK…RDLVDAEAKR (85 aa).

The chain is YcgL domain-containing protein CJA_2437 from Cellvibrio japonicus (strain Ueda107) (Pseudomonas fluorescens subsp. cellulosa).